A 491-amino-acid polypeptide reads, in one-letter code: Cobyric acid synthase (491 aa).

Residues 253 to 429 (AHRVAVVRLP…WHGSLEGDAL (177 aa)) enclose the GATase cobBQ-type domain. Catalysis depends on Cys334, which acts as the Nucleophile. Residue His421 is part of the active site.

Belongs to the CobB/CobQ family. CobQ subfamily.

It functions in the pathway cofactor biosynthesis; adenosylcobalamin biosynthesis. Its function is as follows. Catalyzes amidations at positions B, D, E, and G on adenosylcobyrinic A,C-diamide. NH(2) groups are provided by glutamine, and one molecule of ATP is hydrogenolyzed for each amidation. This is Cobyric acid synthase from Mycobacterium marinum (strain ATCC BAA-535 / M).